The primary structure comprises 243 residues: Probable 2-phosphosulfolactate phosphatase (243 aa).

This sequence belongs to the ComB family. Mg(2+) serves as cofactor.

It catalyses the reaction (2R)-O-phospho-3-sulfolactate + H2O = (2R)-3-sulfolactate + phosphate. In Prochlorococcus marinus (strain MIT 9303), this protein is Probable 2-phosphosulfolactate phosphatase.